The sequence spans 327 residues: Lipoyl synthase (327 aa).

7 residues coordinate [4Fe-4S] cluster: C72, C77, C83, C98, C102, C105, and S313. In terms of domain architecture, Radical SAM core spans 83-302; sequence CWSHGTATIM…RKVGLEKGFL (220 aa).

It belongs to the radical SAM superfamily. Lipoyl synthase family. [4Fe-4S] cluster serves as cofactor.

The protein resides in the cytoplasm. The catalysed reaction is [[Fe-S] cluster scaffold protein carrying a second [4Fe-4S](2+) cluster] + N(6)-octanoyl-L-lysyl-[protein] + 2 oxidized [2Fe-2S]-[ferredoxin] + 2 S-adenosyl-L-methionine + 4 H(+) = [[Fe-S] cluster scaffold protein] + N(6)-[(R)-dihydrolipoyl]-L-lysyl-[protein] + 4 Fe(3+) + 2 hydrogen sulfide + 2 5'-deoxyadenosine + 2 L-methionine + 2 reduced [2Fe-2S]-[ferredoxin]. Its pathway is protein modification; protein lipoylation via endogenous pathway; protein N(6)-(lipoyl)lysine from octanoyl-[acyl-carrier-protein]: step 2/2. Functionally, catalyzes the radical-mediated insertion of two sulfur atoms into the C-6 and C-8 positions of the octanoyl moiety bound to the lipoyl domains of lipoate-dependent enzymes, thereby converting the octanoylated domains into lipoylated derivatives. This Francisella tularensis subsp. holarctica (strain FTNF002-00 / FTA) protein is Lipoyl synthase.